We begin with the raw amino-acid sequence, 622 residues long: Low affinity potassium transport system protein Kup (622 aa).

12 consecutive transmembrane segments (helical) span residues 9 to 29 (LPAITLAAIGVVYGDIGTSPL), 49 to 69 (VFGFLSLIFWLLIFVVSIKYL), 103 to 123 (VIMGLIGGSFFYGEVVITPAI), 137 to 157 (PQLDTWIVPLSIIVLTLLFMI), 165 to 185 (VGKLFAPIMLTWFLILAGLGL), 213 to 233 (VSFIALGAVVLSITGVEALYA), 247 to 267 (WFTVVLPSLTLNYFGQGALLL), 276 to 296 (PFFLLAPDWALIPLLIIAALA), 337 to 357 (IYIPFVNWMLYVAVVIVIVSF), 363 to 383 (LAAAYGIAVTGTMVLTSILST), 396 to 416 (FVALILIAFLCVDIPLFTANL), and 419 to 439 (LLSGGWLPLSLGTVMFIVMTT).

It belongs to the HAK/KUP transporter (TC 2.A.72) family.

It is found in the cell inner membrane. It carries out the reaction K(+)(in) + H(+)(in) = K(+)(out) + H(+)(out). Functionally, responsible for the low-affinity transport of potassium into the cell. Likely operates as a K(+):H(+) symporter. The sequence is that of Low affinity potassium transport system protein Kup from Escherichia fergusonii (strain ATCC 35469 / DSM 13698 / CCUG 18766 / IAM 14443 / JCM 21226 / LMG 7866 / NBRC 102419 / NCTC 12128 / CDC 0568-73).